Reading from the N-terminus, the 844-residue chain is Patched-related protein 9 (844 aa).

Residues 264–421 (LIPWMPWTSL…VTFFNAVMSL (158 aa)) enclose the SSD domain.

The protein belongs to the patched family.

This Caenorhabditis elegans protein is Patched-related protein 9 (ptr-9).